Consider the following 615-residue polypeptide: Chaperone protein DnaK (615 aa).

Thr175 carries the phosphothreonine; by autocatalysis modification. A disordered region spans residues 573-615 (SQEMYQKAAQEQQAAQGAEQAQDNGPKDDNVVDADFKEVDEDK). Residues 580–594 (AAQEQQAAQGAEQAQ) are compositionally biased toward low complexity. A compositionally biased stretch (basic and acidic residues) spans 597–609 (GPKDDNVVDADFK).

This sequence belongs to the heat shock protein 70 family.

Its function is as follows. Acts as a chaperone. This chain is Chaperone protein DnaK, found in Clostridioides difficile (strain 630) (Peptoclostridium difficile).